Reading from the N-terminus, the 359-residue chain is Very-long-chain (3R)-3-hydroxyacyl-CoA dehydratase (359 aa).

Over 1 to 144 (MSALTPHVYW…RKDPFLGLKK (144 aa)) the chain is Cytoplasmic. The CS domain occupies 3-92 (ALTPHVYWAQ…QEEVWWNRLT (90 aa)). Residues 109–133 (LDESDAEMELREKEEKINKVSFESR) adopt a coiled-coil conformation. Residues 145 to 165 (GFLFMYNLVQFLGYSWIFVNM) traverse the membrane as a helical segment. The Lumenal portion of the chain corresponds to 166–186 (TVRLFILGQDSFYDTFHTIAD). The helical transmembrane segment at 187-207 (VMYFCQMLAIMEVINPAVGLV) threads the bilayer. Over 208–209 (KT) the chain is Cytoplasmic. A helical transmembrane segment spans residues 210–230 (GVMPAFIQVMGRNFILFVIFG). Residues 231–239 (SLEDMQNKP) lie on the Lumenal side of the membrane. Residues 240 to 260 (VVFFVFYLWSTIEIFRYPFYM) form a helical membrane-spanning segment. The Cytoplasmic portion of the chain corresponds to 261–277 (LACIDTEWKLLTWLRYT). The chain crosses the membrane as a helical span at residues 278 to 298 (IWMPLYPLGVLAEAVAVIQSI). Catalysis depends on residues Y283 and E290. The Lumenal portion of the chain corresponds to 299–317 (PIFDETKLLSIPLPKATGL). The chain crosses the membrane as a helical span at residues 318 to 338 (SLSFSYILQLYLVVMFLGLFI). The Cytoplasmic portion of the chain corresponds to 339-359 (NFRHLFKQRTRRFRTKKRKAN).

This sequence belongs to the very long-chain fatty acids dehydratase HACD family.

Its subcellular location is the endoplasmic reticulum membrane. It carries out the reaction a very-long-chain (3R)-3-hydroxyacyl-CoA = a very-long-chain (2E)-enoyl-CoA + H2O. It catalyses the reaction (3R)-hydroxyhexadecanoyl-CoA = (2E)-hexadecenoyl-CoA + H2O. It functions in the pathway lipid metabolism; fatty acid biosynthesis. Catalyzes the third of the four reactions of the long-chain fatty acids elongation cycle. This endoplasmic reticulum-bound enzymatic process, allows the addition of two carbons to the chain of long- and very long-chain fatty acids/VLCFAs per cycle. This enzyme catalyzes the dehydration of the 3-hydroxyacyl-CoA intermediate into trans-2,3-enoyl-CoA, within each cycle of fatty acid elongation. Thereby, it participates in the production of VLCFAs of different chain lengths that are involved in multiple biological processes as precursors of membrane lipids and lipid mediators. Involved in Rac1-signaling pathways leading to the modulation of gene expression. The protein is Very-long-chain (3R)-3-hydroxyacyl-CoA dehydratase of Danio rerio (Zebrafish).